A 310-amino-acid chain; its full sequence is Vomeronasal type-1 receptor 50 (310 aa).

Residues 1–16 (MSKANLLHTDNNMKIT) lie on the Extracellular side of the membrane. Residues 17-37 (LFSEVSVGISANSILFVVHLC) form a helical membrane-spanning segment. Residues 38 to 50 (KLLHENKPKPIDL) are Cytoplasmic-facing. The helical transmembrane segment at 51-71 (YIAFFSITQLMLLITMGLIAV) threads the bilayer. The Extracellular segment spans residues 72–93 (DMFMPWGRWDSTTCQSLIYLHR). A disulfide bridge connects residues Cys85 and Cys172. The chain crosses the membrane as a helical span at residues 94 to 114 (LLRGLTFCATCLLNVLWTITL). Residues 115-134 (SPRSSCLTKFKHKSPHHISG) are Cytoplasmic-facing. The helical transmembrane segment at 135-155 (AFLFFCVLYMSFSSHLLVSII) threads the bilayer. Topologically, residues 156–193 (ATFNSTSDNFLYVTQSCSILPVSYSRTSILSTMMTMRE) are extracellular. Asn159 carries an N-linked (GlcNAc...) asparagine glycan. The chain crosses the membrane as a helical span at residues 194-214 (AFLIGLMALSSGYVVVLLWRH). Topologically, residues 215–237 (KKQARHLHSTSLSSKASPEQRAT) are cytoplasmic. A helical transmembrane segment spans residues 238–258 (STIMLLMGFFVVLYILDTVIF). Over 259-269 (QARLKFKDVST) the chain is Extracellular. Residues 270–290 (FFCVKIIISHSYATFSPFVFI) form a helical membrane-spanning segment. Residues 291 to 310 (CNDKYMIKFVTSMCGRIVNV) are Cytoplasmic-facing.

Belongs to the G-protein coupled receptor 1 family. Expressed in a subset of sensory neurons located in the apical layer of the vomeronasal organ.

Its subcellular location is the cell membrane. In terms of biological role, putative pheromone receptor implicated in the regulation of social and reproductive behavior. In Mus musculus (Mouse), this protein is Vomeronasal type-1 receptor 50 (Vmn1r50).